The chain runs to 517 residues: DNA-(apurinic or apyrimidinic site) endonuclease 2 (517 aa).

Positions 9 and 34 each coordinate Mg(2+). The Claspin-like CKB motif motif lies at 82 to 90 (EEGLSGVFC). Tyr142 is an active-site residue. 4 residues coordinate Mg(2+): Asp183, Asn185, Asp299, and His300. Asp183 acts as the Proton donor/acceptor in catalysis. His300 serves as the catalytic Proton acceptor. Residues 347–362 (GNTTEESSELTGTPSF) show a composition bias toward polar residues. Positions 347 to 366 (GNTTEESSELTGTPSFTEGA) are disordered. Residues 395 to 402 (QGNLLSFF) carry the PCNA interacting protein (PIP) box motif. Zn(2+) contacts are provided by Cys463, His466, Cys489, and Cys503. The segment at 463 to 512 (CKGHSEPCVLRTVKKAGPNCGRQFYVCARPEGHSSNPQARCNFFLWLTKK) adopts a GRF-type zinc-finger fold.

This sequence belongs to the DNA repair enzymes AP/ExoA family. As to quaternary structure, interacts (via PIP box and GRF-type Zinc finger domain) with pcna; the interaction is required for 3 -5 SSB end resection, assembly of a checkpoint protein complex to SSB sites, and SSB signaling. Interacts with chek1. Mg(2+) is required as a cofactor. Mn(2+) serves as cofactor. Expressed in eggs (at protein level).

The protein resides in the nucleus. The protein localises to the chromosome. It localises to the cytoplasm. It is found in the mitochondrion. The enzyme catalyses Exonucleolytic cleavage in the 3'- to 5'-direction to yield nucleoside 5'-phosphates.. 3'-5' nuclease activity is stimulated in presence of pcna. Functionally, functions as a weak apurinic/apyrimidinic (AP) endodeoxyribonuclease in the DNA base excision repair (BER) pathway of DNA lesions induced by oxidative and alkylating agents. Initiates repair of AP sites in DNA by catalyzing hydrolytic incision of the phosphodiester backbone immediately adjacent to the damage, generating a single-strand break with 5'-deoxyribose phosphate and 3'-hydroxyl ends. Exhibits 3'-5' exonuclease activity on a 3' DNA substrate; nuclease activity is stimulated by interaction with pcna. Has a preference for the 3' recessed ends over blunt-ended substrates, in both the presence and the absence of pcna. Generates single-stranded DNA (ssDNA) via 3'-5' single-strand break (SSB) end resection, thereby promoting a DNA damage response via replication protein A (rpa2)-binding to ssDNA and the recruitment of a checkpoint protein complex, including atr, atr-interacting protein atrip, and rad9, to damage sites following oxidative stress. Plays a role in reversing blocked 3' DNA ends, problematic lesions that preclude DNA synthesis. Required for chek1 phosphorylation induced by hydrogen peroxide but not by stalled replication forks. The chain is DNA-(apurinic or apyrimidinic site) endonuclease 2 from Xenopus laevis (African clawed frog).